A 161-amino-acid polypeptide reads, in one-letter code: Regulator of ribonuclease activity A (161 aa).

It belongs to the RraA family. Homotrimer. Binds to both RNA-binding sites in the C-terminal region of Rne and to RhlB.

It localises to the cytoplasm. Functionally, globally modulates RNA abundance by binding to RNase E (Rne) and regulating its endonucleolytic activity. Can modulate Rne action in a substrate-dependent manner by altering the composition of the degradosome. Modulates RNA-binding and helicase activities of the degradosome. This chain is Regulator of ribonuclease activity A, found in Sodalis glossinidius (strain morsitans).